Consider the following 183-residue polypeptide: Ribosome-recycling factor (183 aa).

Belongs to the RRF family.

The protein localises to the cytoplasm. In terms of biological role, responsible for the release of ribosomes from messenger RNA at the termination of protein biosynthesis. May increase the efficiency of translation by recycling ribosomes from one round of translation to another. This is Ribosome-recycling factor from Deinococcus deserti (strain DSM 17065 / CIP 109153 / LMG 22923 / VCD115).